Consider the following 411-residue polypeptide: MDDAAKDLGRCAVVLPAGGCGERLGSLTPKQFCTVLGRPLISHTLEAFERASWIKDIIVVVASESLDLMKAIIHKYGHQRVTLVKGGETRHRSIFNGLKVFSENHSDDTAIDKPEVVIIHDAVRPFVDEDFLLQVAKSAKQHGAAGAIRPLVSTVIASSSDGFLDYSLERARHRASEMPQAFQYDVIYRAYLQCTDYDLDFGTECLHLALQYSNVKAKLLEGPPDLWKVTYKRDLYAAESVIKESISQQLCIVTNVKKEAIEVGFLLHENLKLHYKVKAVSSSMCKTIHHLQNIFHGQCCNFICINVKDLDFEETQNLVDLLQTTNASISYPLVIVSVHLTTEDSSSGNKLSGVRKLAKEAHKSNILVYGLLINIDQDKVQLQQTVCEGTAIITALIKDRNPALVGQLMVA.

Belongs to the IspD/TarI cytidylyltransferase family. IspD subfamily. In terms of assembly, homodimer.

The protein resides in the cytoplasm. It localises to the cytosol. It catalyses the reaction D-ribitol 5-phosphate + CTP + H(+) = CDP-L-ribitol + diphosphate. It carries out the reaction D-ribose 5-phosphate + CTP + H(+) = CDP-D-ribose + diphosphate. The enzyme catalyses D-ribulose 5-phosphate + CTP + H(+) = CDP-D-ribulose + diphosphate. The protein operates within protein modification; protein glycosylation. Its function is as follows. Cytidylyltransferase required for protein O-linked mannosylation. Catalyzes the formation of CDP-ribitol nucleotide sugar from D-ribitol 5-phosphate. CDP-ribitol is a substrate of FKTN during the biosynthesis of the phosphorylated O-mannosyl trisaccharide (N-acetylgalactosamine-beta-3-N-acetylglucosamine-beta-4-(phosphate-6-)mannose), a carbohydrate structure present in alpha-dystroglycan (DAG1), which is required for binding laminin G-like domain-containing extracellular proteins with high affinity. Shows activity toward other pentose phosphate sugars and mediates formation of CDP-ribulose or CDP-ribose using CTP and ribulose-5-phosphate or ribose-5-phosphate, respectively. Not involved in dolichol production. In Xenopus tropicalis (Western clawed frog), this protein is D-ribitol-5-phosphate cytidylyltransferase (crppa).